Here is a 715-residue protein sequence, read N- to C-terminus: Methionine--tRNA ligase (715 aa).

Positions 17–27 (PYANGPIHLGH) match the 'HIGH' region motif. Zn(2+)-binding residues include Cys-148, Cys-151, Cys-161, and Cys-164. Positions 359–363 (KMSKS) match the 'KMSKS' region motif. Lys-362 provides a ligand contact to ATP. A tRNA-binding domain is found at 614–715 (DLSKVELRVG…KDAKPGDRLK (102 aa)).

It belongs to the class-I aminoacyl-tRNA synthetase family. MetG type 1 subfamily. In terms of assembly, homodimer. It depends on Zn(2+) as a cofactor.

Its subcellular location is the cytoplasm. It carries out the reaction tRNA(Met) + L-methionine + ATP = L-methionyl-tRNA(Met) + AMP + diphosphate. Its function is as follows. Is required not only for elongation of protein synthesis but also for the initiation of all mRNA translation through initiator tRNA(fMet) aminoacylation. This is Methionine--tRNA ligase from Leptospira interrogans serogroup Icterohaemorrhagiae serovar Lai (strain 56601).